A 746-amino-acid chain; its full sequence is WD repeat-containing and planar cell polarity effector protein fritz homolog (746 aa).

WD repeat units lie at residues 326 to 374 (IQCV…TLLA) and 375 to 414 (QTEL…INIQ).

Belongs to the WD repeat fritz family. As to quaternary structure, component of the CPLANE (ciliogenesis and planar polarity effectors) complex, composed of INTU, FUZ and WDPCP. Interacts with CPLANE1.

The protein resides in the cell membrane. It localises to the cytoplasm. Its subcellular location is the cytoskeleton. It is found in the cilium axoneme. The protein localises to the cilium basal body. In terms of biological role, probable effector of the planar cell polarity signaling pathway which regulates the septin cytoskeleton in both ciliogenesis and collective cell movements. Together with FUZ and WDPCP proposed to function as core component of the CPLANE (ciliogenesis and planar polarity effectors) complex involved in the recruitment of peripheral IFT-A proteins to basal bodies. Binds phosphatidylinositol 3-phosphate with highest affinity, followed by phosphatidylinositol 4-phosphate and phosphatidylinositol 5-phosphate. This chain is WD repeat-containing and planar cell polarity effector protein fritz homolog (WDPCP), found in Homo sapiens (Human).